The following is a 93-amino-acid chain: Small ribosomal subunit protein uS19 (93 aa).

It belongs to the universal ribosomal protein uS19 family.

Functionally, protein S19 forms a complex with S13 that binds strongly to the 16S ribosomal RNA. The sequence is that of Small ribosomal subunit protein uS19 from Micrococcus luteus (strain ATCC 4698 / DSM 20030 / JCM 1464 / CCM 169 / CCUG 5858 / IAM 1056 / NBRC 3333 / NCIMB 9278 / NCTC 2665 / VKM Ac-2230) (Micrococcus lysodeikticus).